The following is a 485-amino-acid chain: Glutamyl-tRNA(Gln) amidotransferase subunit A (485 aa).

Active-site charge relay system residues include K78 and S153. S177 serves as the catalytic Acyl-ester intermediate.

This sequence belongs to the amidase family. GatA subfamily. Heterotrimer of A, B and C subunits.

It carries out the reaction L-glutamyl-tRNA(Gln) + L-glutamine + ATP + H2O = L-glutaminyl-tRNA(Gln) + L-glutamate + ADP + phosphate + H(+). In terms of biological role, allows the formation of correctly charged Gln-tRNA(Gln) through the transamidation of misacylated Glu-tRNA(Gln) in organisms which lack glutaminyl-tRNA synthetase. The reaction takes place in the presence of glutamine and ATP through an activated gamma-phospho-Glu-tRNA(Gln). The polypeptide is Glutamyl-tRNA(Gln) amidotransferase subunit A (Bacillus cereus (strain AH820)).